The primary structure comprises 682 residues: 1,4-alpha-glucan-branching enzyme (682 aa).

Positions 88 and 124 each coordinate (1,4-alpha-D-glucosyl)n. Catalysis depends on Asp-342, which acts as the Nucleophile. Glu-397 acts as the Proton donor in catalysis.

It belongs to the glycosyl hydrolase 13 family. GlgB subfamily.

The protein resides in the cytoplasm. It catalyses the reaction Transfers a segment of a (1-&gt;4)-alpha-D-glucan chain to a primary hydroxy group in a similar glucan chain.. It participates in glycan biosynthesis; glycogen biosynthesis. In terms of biological role, glycogen-branching enzyme participates in the glycogen biosynthetic process along with glycogenin and glycogen synthase. Generates alpha-1,6-glucosidic branches from alpha-1,4-linked glucose chains, to increase solubility of the glycogen polymer. The protein is 1,4-alpha-glucan-branching enzyme (GLC3) of Cryptococcus neoformans var. neoformans serotype D (strain B-3501A) (Filobasidiella neoformans).